Here is a 215-residue protein sequence, read N- to C-terminus: Cytochrome b6 (215 aa).

The helical transmembrane segment at 32-52 threads the bilayer; that stretch reads IFYCIGGITFTCFLVQVATGF. Residue cysteine 35 coordinates heme c. The heme b site is built by glycine 37, arginine 83, histidine 86, histidine 100, arginine 103, and arginine 114. The chain crosses the membrane as a helical span at residues 90–110; it reads ASMMVLMMVLHVFRVYLTGGF. The next 2 membrane-spanning stretches (helical) occupy residues 116–136 and 186–206; these read LTWV…VTGY and LHTF…FLMI. Residues histidine 187 and histidine 202 each contribute to the heme b site. 2 residues coordinate heme c: arginine 207 and isoleucine 211. Serine 212 provides a ligand contact to heme b.

Belongs to the cytochrome b family. PetB subfamily. In terms of assembly, the 4 large subunits of the cytochrome b6-f complex are cytochrome b6, subunit IV (17 kDa polypeptide, PetD), cytochrome f and the Rieske protein, while the 4 small subunits are PetG, PetL, PetM and PetN. The complex functions as a dimer. Heme b is required as a cofactor. It depends on heme c as a cofactor. The N-terminus is blocked.

It is found in the plastid. The protein localises to the chloroplast thylakoid membrane. In terms of biological role, component of the cytochrome b6-f complex, which mediates electron transfer between photosystem II (PSII) and photosystem I (PSI), cyclic electron flow around PSI, and state transitions. This is Cytochrome b6 from Chlamydomonas reinhardtii (Chlamydomonas smithii).